Consider the following 241-residue polypeptide: Ribonuclease HII (241 aa).

The RNase H type-2 domain maps to 27–227 (GPVAGVDEAG…REARSLRLED (201 aa)). A divalent metal cation is bound by residues aspartate 33, glutamate 34, and aspartate 128.

The protein belongs to the RNase HII family. Mn(2+) is required as a cofactor. Mg(2+) serves as cofactor.

Its subcellular location is the cytoplasm. It catalyses the reaction Endonucleolytic cleavage to 5'-phosphomonoester.. Endonuclease that specifically degrades the RNA of RNA-DNA hybrids. The polypeptide is Ribonuclease HII (Frankia alni (strain DSM 45986 / CECT 9034 / ACN14a)).